Here is a 248-residue protein sequence, read N- to C-terminus: Pyridoxine 5'-phosphate synthase (248 aa).

Asn7 serves as a coordination point for 3-amino-2-oxopropyl phosphate. Asp9–His10 serves as a coordination point for 1-deoxy-D-xylulose 5-phosphate. Arg18 contributes to the 3-amino-2-oxopropyl phosphate binding site. His52 functions as the Proton acceptor in the catalytic mechanism. Arg54 and His59 together coordinate 1-deoxy-D-xylulose 5-phosphate. The active-site Proton acceptor is the Glu79. 1-deoxy-D-xylulose 5-phosphate is bound at residue Thr109. The Proton donor role is filled by His201. Residues Gly202 and Gly223–His224 contribute to the 3-amino-2-oxopropyl phosphate site.

This sequence belongs to the PNP synthase family. As to quaternary structure, homooctamer; tetramer of dimers.

The protein resides in the cytoplasm. The enzyme catalyses 3-amino-2-oxopropyl phosphate + 1-deoxy-D-xylulose 5-phosphate = pyridoxine 5'-phosphate + phosphate + 2 H2O + H(+). The protein operates within cofactor biosynthesis; pyridoxine 5'-phosphate biosynthesis; pyridoxine 5'-phosphate from D-erythrose 4-phosphate: step 5/5. Catalyzes the complicated ring closure reaction between the two acyclic compounds 1-deoxy-D-xylulose-5-phosphate (DXP) and 3-amino-2-oxopropyl phosphate (1-amino-acetone-3-phosphate or AAP) to form pyridoxine 5'-phosphate (PNP) and inorganic phosphate. The protein is Pyridoxine 5'-phosphate synthase of Opitutus terrae (strain DSM 11246 / JCM 15787 / PB90-1).